We begin with the raw amino-acid sequence, 492 residues long: Acyl-CoA-binding domain-containing protein 5 (492 aa).

The ACB domain maps to histidine 8 to methionine 97. Residues isoleucine 19 to phenylalanine 28, tyrosine 39 to lysine 43, lysine 65, and tyrosine 84 each bind an acyl-CoA. Disordered stretches follow at residues alanine 141–glutamate 162 and valine 335–proline 399. Over residues alanine 153–glutamate 162 the composition is skewed to acidic residues. The span at valine 335 to aspartate 360 shows a compositional bias: basic and acidic residues. Residues glycine 378–glycine 388 show a composition bias toward gly residues. Residues aspartate 389–proline 399 show a composition bias toward basic and acidic residues. Residues glutamate 405–valine 431 are a coiled coil. Residues glycine 464–leucine 484 traverse the membrane as a helical segment.

This sequence belongs to the ATG37 family.

The protein localises to the peroxisome membrane. Acyl-CoA binding protein which acts as the peroxisome receptor for pexophagy but is dispensable for aggrephagy and nonselective autophagy. Binds medium- and long-chain acyl-CoA esters. The sequence is that of Acyl-CoA-binding domain-containing protein 5 (ACBD5) from Gallus gallus (Chicken).